The sequence spans 214 residues: Small ribosomal subunit protein uS5 (214 aa).

The region spanning 54-117 (LKYEVVDIKV…RDAKMNILPV (64 aa)) is the S5 DRBM domain.

The protein belongs to the universal ribosomal protein uS5 family. As to quaternary structure, part of the 30S ribosomal subunit. Contacts protein S4.

Functionally, with S4 and S12 plays an important role in translational accuracy. This is Small ribosomal subunit protein uS5 from Saccharolobus islandicus (strain Y.N.15.51 / Yellowstone #2) (Sulfolobus islandicus).